Here is a 1386-residue protein sequence, read N- to C-terminus: DNA-directed RNA polymerase subunit beta (1386 aa).

The protein belongs to the RNA polymerase beta chain family. As to quaternary structure, the RNAP catalytic core consists of 2 alpha, 1 beta, 1 beta' and 1 omega subunit. When a sigma factor is associated with the core the holoenzyme is formed, which can initiate transcription.

The catalysed reaction is RNA(n) + a ribonucleoside 5'-triphosphate = RNA(n+1) + diphosphate. In terms of biological role, DNA-dependent RNA polymerase catalyzes the transcription of DNA into RNA using the four ribonucleoside triphosphates as substrates. This Nitratiruptor sp. (strain SB155-2) protein is DNA-directed RNA polymerase subunit beta.